The sequence spans 49 residues: Large ribosomal subunit protein bL33A (49 aa).

The protein belongs to the bacterial ribosomal protein bL33 family.

The sequence is that of Large ribosomal subunit protein bL33A (rpmG1) from Enterococcus faecalis (strain ATCC 700802 / V583).